We begin with the raw amino-acid sequence, 840 residues long: DNA mismatch repair protein MutS (840 aa).

601–608 (GPNMSGKS) is a binding site for ATP.

The protein belongs to the DNA mismatch repair MutS family.

Its function is as follows. This protein is involved in the repair of mismatches in DNA. It is possible that it carries out the mismatch recognition step. This protein has a weak ATPase activity. The protein is DNA mismatch repair protein MutS of Lactococcus lactis subsp. cremoris (strain MG1363).